The chain runs to 288 residues: Probable ketoamine kinase VP1481 (288 aa).

92 to 94 (NYL) is a binding site for ATP. The Proton acceptor role is filled by Asp-195.

It belongs to the fructosamine kinase family.

Its function is as follows. Ketoamine kinase that phosphorylates ketoamines on the third carbon of the sugar moiety to generate ketoamine 3-phosphate. The protein is Probable ketoamine kinase VP1481 of Vibrio parahaemolyticus serotype O3:K6 (strain RIMD 2210633).